Consider the following 207-residue polypeptide: Octanoyltransferase (207 aa).

Residues 29–204 (AETRDELWVV…HLERHLSTSK (176 aa)) enclose the BPL/LPL catalytic domain. Substrate is bound by residues 68–75 (RGGQITYH), 135–137 (SLG), and 148–150 (GLS). Cysteine 166 serves as the catalytic Acyl-thioester intermediate.

This sequence belongs to the LipB family.

It localises to the cytoplasm. The catalysed reaction is octanoyl-[ACP] + L-lysyl-[protein] = N(6)-octanoyl-L-lysyl-[protein] + holo-[ACP] + H(+). The protein operates within protein modification; protein lipoylation via endogenous pathway; protein N(6)-(lipoyl)lysine from octanoyl-[acyl-carrier-protein]: step 1/2. Functionally, catalyzes the transfer of endogenously produced octanoic acid from octanoyl-acyl-carrier-protein onto the lipoyl domains of lipoate-dependent enzymes. Lipoyl-ACP can also act as a substrate although octanoyl-ACP is likely to be the physiological substrate. The polypeptide is Octanoyltransferase (Chromobacterium violaceum (strain ATCC 12472 / DSM 30191 / JCM 1249 / CCUG 213 / NBRC 12614 / NCIMB 9131 / NCTC 9757 / MK)).